A 257-amino-acid chain; its full sequence is HTH-type transcriptional activator mta (257 aa).

Residues 2-71 (KYQVKQVAEI…LDEIKEMLDH (70 aa)) enclose the HTH merR-type domain. Positions 5–24 (VKQVAEISGVSIRTLHHYDN) form a DNA-binding region, H-T-H motif. The segment at 71–74 (HPNF) is hinge. The essential for dimerization stretch occupies residues 76–104 (RKAALQSQKEILMKKKQRMDEMIQTIDRT). Positions 76–107 (RKAALQSQKEILMKKKQRMDEMIQTIDRTLLS) form a coiled coil.

As to quaternary structure, homodimer.

It is found in the cytoplasm. Global transcriptional regulator that activates transcription of bmr and blt by binding directly to their promoter. Also stimulates the expression of the mta gene itself, ydfK and ymfE. The polypeptide is HTH-type transcriptional activator mta (mta) (Bacillus subtilis (strain 168)).